A 223-amino-acid chain; its full sequence is Bone marrow proteoglycan (223 aa).

Positions 1 to 16 (MKFPLLLALLVGGASA) are cleaved as a signal peptide. Residues 17-106 (LHLSSETSDS…TSLMGDSGCK (90 aa)) constitute a propeptide, acidic. Residues 20–81 (SSETSDSKSP…PGDEGAVSGQ (62 aa)) are disordered. O-linked (GalNAc...) threonine; partial glycosylation is present at Thr-23. O-linked (GalNAc...) serine glycosylation is present at Ser-24. Residue Ser-66 is glycosylated (O-linked (Xyl...) (chondroitin sulfate) serine). Residues 124–223 (SVCRRCYRGT…VKRRPFICSY (100 aa)) enclose the C-type lectin domain. Disulfide bonds link Cys-126/Cys-221 and Cys-198/Cys-213.

In terms of processing, nitrated.

The protein resides in the secreted. Its function is as follows. Cytotoxin and helminthotoxin. MBP also induces non-cytolytic histamine release from basophils. It is involved in antiparasitic defense mechanisms and immune hypersensitivity reactions. This chain is Bone marrow proteoglycan (Prg2), found in Mus musculus (Mouse).